A 408-amino-acid chain; its full sequence is LL-diaminopimelate aminotransferase (408 aa).

Substrate contacts are provided by tyrosine 15 and glycine 42. Pyridoxal 5'-phosphate is bound by residues tyrosine 72, 108–109 (SK), tyrosine 132, asparagine 187, tyrosine 218, and 246–248 (SFS). Substrate is bound by residues lysine 109, tyrosine 132, and asparagine 187. An N6-(pyridoxal phosphate)lysine modification is found at lysine 249. Pyridoxal 5'-phosphate contacts are provided by arginine 257 and asparagine 291. Positions 291 and 387 each coordinate substrate.

Belongs to the class-I pyridoxal-phosphate-dependent aminotransferase family. LL-diaminopimelate aminotransferase subfamily. As to quaternary structure, homodimer. Pyridoxal 5'-phosphate serves as cofactor.

It carries out the reaction (2S,6S)-2,6-diaminopimelate + 2-oxoglutarate = (S)-2,3,4,5-tetrahydrodipicolinate + L-glutamate + H2O + H(+). It functions in the pathway amino-acid biosynthesis; L-lysine biosynthesis via DAP pathway; LL-2,6-diaminopimelate from (S)-tetrahydrodipicolinate (aminotransferase route): step 1/1. Functionally, involved in the synthesis of meso-diaminopimelate (m-DAP or DL-DAP), required for both lysine and peptidoglycan biosynthesis. Catalyzes the direct conversion of tetrahydrodipicolinate to LL-diaminopimelate. The chain is LL-diaminopimelate aminotransferase from Prochlorococcus marinus (strain NATL1A).